A 232-amino-acid polypeptide reads, in one-letter code: Membrane steroid-binding protein 1 (232 aa).

Residues 25 to 45 traverse the membrane as a helical segment; the sequence is AAFFTAVAAAAALYHVVSGIF. Disordered stretches follow at residues 48–77 and 172–232; these read PPPP…VSEE and TVPV…AKES. One can recognise a Cytochrome b5 heme-binding domain in the interval 71–170; it reads LGEVSEEELR…GKYVKVGTVK (100 aa). The segment at 73 to 170 is steroid-binding; the sequence is EVSEEELRQY…GKYVKVGTVK (98 aa). Positions 179 to 193 are enriched in low complexity; that stretch reads APSTSPETTETAAAA. Over residues 194 to 219 the composition is skewed to basic and acidic residues; that stretch reads EPEKAPATEEKPREVSSEEVKEKEDA.

This sequence belongs to the cytochrome b5 family. MAPR subfamily. In terms of assembly, interacts with SERL2. Expressed in leaf sheaths, leaf blades and panicles.

It is found in the cell membrane. Its function is as follows. Binds multiple steroid compounds. May act as a coreceptor with SERL2 and enhance its endocytosis. The protein is Membrane steroid-binding protein 1 of Oryza sativa subsp. japonica (Rice).